The sequence spans 426 residues: Endoglucanase (426 aa).

The signal sequence occupies residues 1 to 19 (MRRCMPLVAASVAALMLAG). Cys-20 is lipidated: N-palmitoyl cysteine. Cys-20 carries S-diacylglycerol cysteine lipidation. Positions 20 to 45 (CGGGDGDPSLSTASVSATDTTTLKPA) are excised as a propeptide. Glu-249 functions as the Proton donor in the catalytic mechanism. Catalysis depends on Glu-361, which acts as the Nucleophile.

Belongs to the glycosyl hydrolase 5 (cellulase A) family.

Its subcellular location is the cell membrane. It catalyses the reaction Endohydrolysis of (1-&gt;4)-beta-D-glucosidic linkages in cellulose, lichenin and cereal beta-D-glucans.. The chain is Endoglucanase (egl) from Ralstonia solanacearum (Pseudomonas solanacearum).